Consider the following 286-residue polypeptide: Phosphatidylglycerol--prolipoprotein diacylglyceryl transferase (286 aa).

The next 4 helical transmembrane spans lie at 25-45 (WYAL…RMLL), 65-85 (FILW…VLFY), 103-123 (GGMS…LFGW), and 127-147 (VPIL…LFLG). A 1,2-diacyl-sn-glycero-3-phospho-(1'-sn-glycerol) is bound at residue arginine 148. 3 helical membrane-spanning segments follow: residues 188–208 (AGLE…AGAL), 212–232 (GLII…GEFF), and 248–268 (MGML…ITTW).

It belongs to the Lgt family.

It is found in the cell inner membrane. It catalyses the reaction L-cysteinyl-[prolipoprotein] + a 1,2-diacyl-sn-glycero-3-phospho-(1'-sn-glycerol) = an S-1,2-diacyl-sn-glyceryl-L-cysteinyl-[prolipoprotein] + sn-glycerol 1-phosphate + H(+). The protein operates within protein modification; lipoprotein biosynthesis (diacylglyceryl transfer). Its function is as follows. Catalyzes the transfer of the diacylglyceryl group from phosphatidylglycerol to the sulfhydryl group of the N-terminal cysteine of a prolipoprotein, the first step in the formation of mature lipoproteins. This Rhodopseudomonas palustris (strain ATCC BAA-98 / CGA009) protein is Phosphatidylglycerol--prolipoprotein diacylglyceryl transferase.